A 503-amino-acid chain; its full sequence is Maturase K (503 aa).

Belongs to the intron maturase 2 family. MatK subfamily.

It is found in the plastid. It localises to the chloroplast. Usually encoded in the trnK tRNA gene intron. Probably assists in splicing its own and other chloroplast group II introns. This is Maturase K from Liquidambar formosana (Formosan gum).